The chain runs to 144 residues: Interleukin-3 (144 aa).

Positions 1 to 17 are cleaved as a signal peptide; the sequence is MSSLSILHLLLLLLALH.

This sequence belongs to the IL-3 family. In terms of assembly, monomer.

Its subcellular location is the secreted. Its function is as follows. Granulocyte/macrophage colony-stimulating factors are cytokines that act in hematopoiesis by controlling the production, differentiation, and function of 2 related white cell populations of the blood, the granulocytes and the monocytes-macrophages. Functionally, this CSF induces granulocytes, macrophages, mast cells, stem cells, erythroid cells, eosinophils and megakaryocytes. The protein is Interleukin-3 (IL3) of Bos taurus (Bovine).